Reading from the N-terminus, the 548-residue chain is Isocitrate dehydrogenase [NAD(+)] 1, mitochondrial (548 aa).

Residues 1–53 (MSSLSTLRILHSTAGRRWASYYGIYPKSAACSSSSVAIARFFSTAADRPPKHA) constitute a mitochondrion transit peptide. Residues 132-134 (TIT) and Asn-153 each bind NAD(+). D-threo-isocitrate-binding positions include 151–157 (SPNGAMR), Arg-187, Tyr-194, Lys-266, Asp-311, and Asp-335. Mg(2+)-binding residues include Asp-311, Asp-335, and Asp-339. NAD(+)-binding positions include 372–377 (HGTVSD) and Asn-391. The EF-hand domain maps to 499–534 (IDEEAINGLFQKYDKNGDGFIDFEEFTRMLVKMNLA). Residues Asp-512, Asn-514, Asp-516, Phe-518, and Glu-523 each coordinate Ca(2+).

It belongs to the isocitrate and isopropylmalate dehydrogenases family. Homodimer. Mg(2+) is required as a cofactor. Mn(2+) serves as cofactor.

It is found in the mitochondrion. The enzyme catalyses D-threo-isocitrate + NAD(+) = 2-oxoglutarate + CO2 + NADH. With respect to regulation, the homodimer exhibits allosteric regulation by isocitrate. Activated by Mn(2+) and Mg(2+). No activation by Na(+), K(+) or Li(+). Inhibited by Co(2+), Cu(2+) and Ni(2+), but not with Ca(2+) in the presence of Mn(2+) or Mg(2+). Competitively inhibited by NADH, but no effect on activity by 1.0 mM citrate. Strongly inhibited by excess ATP, ADP, AMP and alpha-ketoglutarate. In terms of biological role, performs an essential role in the oxidative function of the tricarboxylic acid cycle and respiration. Catalyzes the decarboxylation of isocitrate to produce 2-oxoglutarate and generate NADH to provide electrons for energy production. No activity with NADP(+). This chain is Isocitrate dehydrogenase [NAD(+)] 1, mitochondrial, found in Phaeodactylum tricornutum (strain CCAP 1055/1).